Here is a 27-residue protein sequence, read N- to C-terminus: iraD leader peptide (27 aa).

Its function is as follows. A short protein whose stop codon overlaps with the start codon of downstream iraD; its mRNA secondary structure is predicted to fold and sequester the Shine-Dalgarno sequence of iraD. When this protein is expressed the downstream iraD is also expressed due to ribosomal coupling. The protein is iraD leader peptide (idlP) of Escherichia coli (strain K12).